Reading from the N-terminus, the 344-residue chain is Ketol-acid reductoisomerase (NADP(+)) (344 aa).

The KARI N-terminal Rossmann domain occupies 2–181; sequence EKIYYDADIS…GAGRAGILTT (180 aa). Residues 25 to 28, Arg48, Ser52, and 82 to 85 contribute to the NADP(+) site; these read YGSQ and DERQ. The active site involves His107. Gly133 is an NADP(+) binding site. A KARI C-terminal knotted domain is found at 182–327; the sequence is TFREETETDL…RKLRSMMPFI (146 aa). Residues Asp190, Glu194, Glu226, and Glu230 each contribute to the Mg(2+) site. A substrate-binding site is contributed by Ser251.

The protein belongs to the ketol-acid reductoisomerase family. It depends on Mg(2+) as a cofactor.

The catalysed reaction is (2R)-2,3-dihydroxy-3-methylbutanoate + NADP(+) = (2S)-2-acetolactate + NADPH + H(+). It carries out the reaction (2R,3R)-2,3-dihydroxy-3-methylpentanoate + NADP(+) = (S)-2-ethyl-2-hydroxy-3-oxobutanoate + NADPH + H(+). Its pathway is amino-acid biosynthesis; L-isoleucine biosynthesis; L-isoleucine from 2-oxobutanoate: step 2/4. It functions in the pathway amino-acid biosynthesis; L-valine biosynthesis; L-valine from pyruvate: step 2/4. Functionally, involved in the biosynthesis of branched-chain amino acids (BCAA). Catalyzes an alkyl-migration followed by a ketol-acid reduction of (S)-2-acetolactate (S2AL) to yield (R)-2,3-dihydroxy-isovalerate. In the isomerase reaction, S2AL is rearranged via a Mg-dependent methyl migration to produce 3-hydroxy-3-methyl-2-ketobutyrate (HMKB). In the reductase reaction, this 2-ketoacid undergoes a metal-dependent reduction by NADPH to yield (R)-2,3-dihydroxy-isovalerate. The chain is Ketol-acid reductoisomerase (NADP(+)) from Alicyclobacillus acidocaldarius subsp. acidocaldarius (strain ATCC 27009 / DSM 446 / BCRC 14685 / JCM 5260 / KCTC 1825 / NBRC 15652 / NCIMB 11725 / NRRL B-14509 / 104-IA) (Bacillus acidocaldarius).